Consider the following 485-residue polypeptide: GlcNAc-binding protein A (485 aa).

The signal sequence occupies residues 1–23 (MKKQPKMTAIALILSGISGLAYG). Positions 24 to 201 (HGYVSAVENG…SFYNVIDVKF (178 aa)) constitute a Chitin-binding type-4 domain. The region spanning 437–478 (AGTKVLASDGAIYQCKPWPYSGYCQQWTSNATQYQPGTGSHW) is the Chitin-binding type-3 domain.

The protein belongs to the GbpA family.

Its subcellular location is the secreted. Probably interacts with GlcNAc residues. May promote attachment to both epithelial cell surfaces and chitin. The chain is GlcNAc-binding protein A from Vibrio cholerae serotype O1 (strain ATCC 39541 / Classical Ogawa 395 / O395).